The following is a 768-amino-acid chain: Actin filament-associated protein 1-like 1 (768 aa).

A disordered region spans residues 83 to 145 (LRDMSDDGEP…GKSPEYISSH (63 aa)). Ser-87, Ser-93, Ser-97, Ser-103, and Ser-153 each carry phosphoserine. A compositionally biased stretch (polar residues) spans 165-185 (SYPTTRMNGELKNSYNDSDAM). Residues 165–211 (SYPTTRMNGELKNSYNDSDAMSSSYESYDEEEEEEKGRQPKHQWPSE) form a disordered region. The region spanning 220-316 (DCRICAFLLR…WLKVIREVSR (97 aa)) is the PH 1 domain. Phosphoserine is present on residues Ser-329 and Ser-343. Residues 340-349 (KRLSQEKQNS) are compositionally biased toward basic and acidic residues. Positions 340 to 382 (KRLSQEKQNSDSDSLGMNDSGSTLGRREACEHGKGKKNSLAEL) are disordered. Residues 350 to 362 (DSDSLGMNDSGST) show a composition bias toward polar residues. The PH 2 domain maps to 418-512 (EVPCCGYLNV…WLGLLLVEMG (95 aa)). Tyr-557 is subject to Phosphotyrosine. The interval 564 to 609 (KVQDEEPQRPTGAQVKRHASSCSEKSHRADPQVKVKRHASSANQYK) is disordered. Residues 587 to 596 (EKSHRADPQV) are compositionally biased toward basic and acidic residues. The stretch at 611 to 701 (GKNRAEEDAR…AVKERLQQSL (91 aa)) forms a coiled coil. A disordered region spans residues 705-768 (PALGLSVSNK…KAKEWEMKKT (64 aa)). Polar residues predominate over residues 710 to 734 (SVSNKNKSQDTTNKPQSNAPEQSLP). Position 747 is a phosphoserine (Ser-747). Over residues 759-768 (KAKEWEMKKT) the composition is skewed to basic and acidic residues.

Interacts with CTTN.

The protein resides in the cytoplasm. Its subcellular location is the cell projection. It is found in the podosome. It localises to the invadopodium. The protein localises to the cytoskeleton. The protein resides in the stress fiber. May be involved in podosome and invadosome formation. The sequence is that of Actin filament-associated protein 1-like 1 (Afap1l1) from Mus musculus (Mouse).